A 555-amino-acid polypeptide reads, in one-letter code: Serine/threonine-protein kinase Nek4 (555 aa).

The 255-residue stretch at 4–258 (YEVLEQIGKG…ANELLNHPHL (255 aa)) folds into the Protein kinase domain. Residues 10-18 (IGKGSFGSA) and Lys-33 each bind ATP. Asp-129 acts as the Proton acceptor in catalysis. 3 disordered regions span residues 288–328 (LKER…MFNG), 346–372 (QRQE…KAST), and 443–477 (NRET…ITKD). Positions 304–320 (PSVSDTEAGSVSSSGKA) are enriched in polar residues.

It belongs to the protein kinase superfamily. NEK Ser/Thr protein kinase family. NIMA subfamily.

It carries out the reaction L-seryl-[protein] + ATP = O-phospho-L-seryl-[protein] + ADP + H(+). It catalyses the reaction L-threonyl-[protein] + ATP = O-phospho-L-threonyl-[protein] + ADP + H(+). May be involved in plant development processes. The sequence is that of Serine/threonine-protein kinase Nek4 (NEK4) from Arabidopsis thaliana (Mouse-ear cress).